Reading from the N-terminus, the 331-residue chain is NADH-quinone oxidoreductase subunit H (331 aa).

9 consecutive transmembrane segments (helical) span residues Leu5–Leu25, Gly45–Phe65, Phe78–Val98, Val122–Ala142, Val156–Val176, Ile192–Phe212, Phe245–Leu265, Phe271–Phe291, and Trp311–Ile331.

This sequence belongs to the complex I subunit 1 family. In terms of assembly, NDH-1 is composed of 14 different subunits. Subunits NuoA, H, J, K, L, M, N constitute the membrane sector of the complex.

The protein localises to the cell inner membrane. The enzyme catalyses a quinone + NADH + 5 H(+)(in) = a quinol + NAD(+) + 4 H(+)(out). NDH-1 shuttles electrons from NADH, via FMN and iron-sulfur (Fe-S) centers, to quinones in the respiratory chain. The immediate electron acceptor for the enzyme in this species is believed to be ubiquinone. Couples the redox reaction to proton translocation (for every two electrons transferred, four hydrogen ions are translocated across the cytoplasmic membrane), and thus conserves the redox energy in a proton gradient. This subunit may bind ubiquinone. This is NADH-quinone oxidoreductase subunit H from Campylobacter concisus (strain 13826).